Reading from the N-terminus, the 553-residue chain is Nucleoside-diphosphatase mig-23 (553 aa).

Over 1-8 (MRVSRRFT) the chain is Cytoplasmic. A helical transmembrane segment spans residues 9–29 (ILAITAMIFLSLIICIYAVAA). The Lumenal segment spans residues 30-489 (HTTVNVILQK…IVKETHSASE (460 aa)). Glu-174 acts as the Proton acceptor in catalysis. Residues Asn-190 and Asn-284 are each glycosylated (N-linked (GlcNAc...) asparagine). A helical transmembrane segment spans residues 490–510 (SLWAPLFFLSAVFCLFVLVCA). Over 511–553 (KEHSLLCFDDKRRASFGLTRRQYSYKMLKEDRTSSSAFLENFA) the chain is Cytoplasmic.

This sequence belongs to the GDA1/CD39 NTPase family.

The protein resides in the golgi apparatus membrane. It catalyses the reaction a ribonucleoside 5'-diphosphate + H2O = a ribonucleoside 5'-phosphate + phosphate + H(+). Its function is as follows. Seems to be able to hydrolyze ADP, UDP and GDP. Supports mig-17 glycosylation and surface expression, which is required for proper migration of distal tip cells during gonad morphogenesis. In Caenorhabditis briggsae, this protein is Nucleoside-diphosphatase mig-23.